The sequence spans 816 residues: H(+)/Cl(-) exchange transporter 5 (816 aa).

The Cytoplasmic segment spans residues 1–124 (MAMWQGAMDN…WALIHSVSDA (124 aa)). 2 helical membrane passes run 125–162 (FSGWLLMLLIGLLSGSLAGLIDISAHWMTDLKEGICTG) and 208–231 (VNYFMYVLWALLFAFLAVSLVKVF). The short motif at 237-241 (GSGIP) is the Selectivity filter part_1 element. Serine 238 contacts chloride. The segment at residues 240 to 247 (IPEIKTIL) is an intramembrane region (helical). A run of 2 helical transmembrane segments spans residues 256–275 (LGKWTLVIKTITLVLAVSSG) and 281–300 (EGPLVHVACCCGNILCHCFN). The Selectivity filter part_2 motif lies at 279 to 283 (GKEGP). Intramembrane regions (helical) lie at residues 312–324 (VLSAAAAAGVSVA) and 328–336 (PIGGVLFSL). Transmembrane regions (helical) follow at residues 348–366 (LWRSFFAALVAAFTLRSIN), 389–414 (LVPFILLGIFGGLWGALFIRTNIAWC), 422–442 (LGKYPVIEVLVVTAITAILAF), 498–518 (MWQLALTLILKIVITIFTFGM), and 523–542 (GLFIPSMAVGAIAGRLLGVG). Positions 523–527 (GLFIP) match the Selectivity filter part_3 motif. A chloride-binding site is contributed by phenylalanine 525. The helical intramembrane region spans 570-584 (GLYAMVGAAACLGGV). An intramembrane region (note=Loop between two helices) is located at residues 585–587 (TRM). Positions 588-599 (TVSLVVIMFELT) form an intramembrane region, helical. An intramembrane region (note=Loop between two helices) is located at residues 600–604 (GGLEY). A helical membrane pass occupies residues 605 to 622 (IVPLMAAAMTSKWVADAL). Topologically, residues 623-816 (GREGIYDAHI…NQDPDSILFN (194 aa)) are cytoplasmic. Residue tyrosine 628 coordinates chloride. CBS domains lie at 656–720 (MKPR…ARKK) and 752–812 (ILDL…DPDS). ATP-binding positions include threonine 666, 687 to 689 (YSG), and 794 to 797 (TKKD).

It belongs to the chloride channel (TC 2.A.49) family. ClC-5/CLCN5 subfamily. As to quaternary structure, interacts with NEDD4 and NEDD4L. Post-translationally, ubiquitinated by NEDD4L in the presence of albumin; which promotes endocytosis and proteasomal degradation.

It localises to the golgi apparatus membrane. The protein localises to the endosome membrane. It is found in the cell membrane. It catalyses the reaction 2 chloride(in) + H(+)(out) = 2 chloride(out) + H(+)(in). Proton-coupled chloride transporter. Functions as antiport system and exchanges chloride ions against protons. Important for normal acidification of the endosome lumen. May play an important role in renal tubular function. The CLC channel family contains both chloride channels and proton-coupled anion transporters that exchange chloride or another anion for protons. The absence of conserved gating glutamate residues is typical for family members that function as channels. The protein is H(+)/Cl(-) exchange transporter 5 (CLCN5) of Pongo abelii (Sumatran orangutan).